The chain runs to 64 residues: Sec-independent protein translocase protein TatA (64 aa).

Residues 10 to 30 form a helical membrane-spanning segment; that stretch reads LVLILGIALIIFGPGKLPELG.

This sequence belongs to the TatA/E family. In terms of assembly, forms a complex with TatC.

It localises to the cell membrane. In terms of biological role, part of the twin-arginine translocation (Tat) system that transports large folded proteins containing a characteristic twin-arginine motif in their signal peptide across membranes. TatA could form the protein-conducting channel of the Tat system. In Alkaliphilus oremlandii (strain OhILAs) (Clostridium oremlandii (strain OhILAs)), this protein is Sec-independent protein translocase protein TatA.